The following is a 693-amino-acid chain: Polyribonucleotide nucleotidyltransferase (693 aa).

Asp-486 and Asp-492 together coordinate Mg(2+). Positions 553–612 (PRIHTIKINPEKIKDVIGKGGSVIRMLTEETGTTIEIEDDGTVKISAVMQEKAKCAIQRI) constitute a KH domain. An S1 motif domain is found at 622-690 (GSVYTGKVTR…RQGRLRLSIK (69 aa)).

Belongs to the polyribonucleotide nucleotidyltransferase family. In terms of assembly, component of the RNA degradosome, which is a multiprotein complex involved in RNA processing and mRNA degradation. Requires Mg(2+) as cofactor.

It is found in the cytoplasm. It carries out the reaction RNA(n+1) + phosphate = RNA(n) + a ribonucleoside 5'-diphosphate. In terms of biological role, involved in mRNA degradation. Catalyzes the phosphorolysis of single-stranded polyribonucleotides processively in the 3'- to 5'-direction. The chain is Polyribonucleotide nucleotidyltransferase from Buchnera aphidicola subsp. Baizongia pistaciae (strain Bp).